Consider the following 305-residue polypeptide: Ornithine carbamoyltransferase, anabolic (305 aa).

Residues 53–56 (STRT), glutamine 80, arginine 104, and 131–134 (HPCQ) contribute to the carbamoyl phosphate site. L-ornithine-binding positions include asparagine 162, aspartate 219, and 223 to 224 (SM). Residues 259–260 (CL) and arginine 287 contribute to the carbamoyl phosphate site.

This sequence belongs to the aspartate/ornithine carbamoyltransferase superfamily. OTCase family. In terms of assembly, homotrimer.

It localises to the cytoplasm. The enzyme catalyses carbamoyl phosphate + L-ornithine = L-citrulline + phosphate + H(+). The protein operates within amino-acid biosynthesis; L-arginine biosynthesis; L-arginine from L-ornithine and carbamoyl phosphate: step 1/3. In terms of biological role, reversibly catalyzes the transfer of the carbamoyl group from carbamoyl phosphate (CP) to the N(epsilon) atom of ornithine (ORN) to produce L-citrulline, which is a substrate for argininosuccinate synthetase (ArgG) involved in the final step in arginine biosynthesis. The chain is Ornithine carbamoyltransferase, anabolic from Pseudomonas aeruginosa (strain ATCC 15692 / DSM 22644 / CIP 104116 / JCM 14847 / LMG 12228 / 1C / PRS 101 / PAO1).